The sequence spans 429 residues: Septin-11 (429 aa).

Ala-2 carries the N-acetylalanine modification. Position 9 is a phosphoserine (Ser-9). The region spanning 38–304 (QGFCFNILCV…ELYRRCKLEE (267 aa)) is the Septin-type G domain. Residues 48 to 55 (GETGIGKS) form a G1 motif region. GTP is bound by residues 48–55 (GETGIGKS), Gly-103, 184–192 (KADTIAKNE), Gly-238, and Arg-253. The G3 motif stretch occupies residues 100–103 (DTVG). Residues 183 to 186 (AKAD) are G4 motif. A coiled-coil region spans residues 320 to 415 (QETYEAKRNE…QSQAQQSGAQ (96 aa)). The disordered stretch occupies residues 398-429 (KKAAAQLLQSQAQQSGAQQTKKDKDKKNASFT). The segment covering 401-416 (AAQLLQSQAQQSGAQQ) has biased composition (low complexity). Residues 417–429 (TKKDKDKKNASFT) are compositionally biased toward basic and acidic residues.

This sequence belongs to the TRAFAC class TrmE-Era-EngA-EngB-Septin-like GTPase superfamily. Septin GTPase family. Septins polymerize into heterooligomeric protein complexes that form filaments, and can associate with cellular membranes, actin filaments and microtubules. Forms homooligomers. GTPase activity is required for filament formation. Interacts with SEPTIN7, SEPTIN9 and SEPTIN12. In terms of tissue distribution, widely expressed, except in leukocytes.

It is found in the cytoplasm. The protein localises to the cytoskeleton. Its subcellular location is the synapse. It localises to the cell projection. The protein resides in the dendritic spine. It is found in the axon. Filament-forming cytoskeletal GTPase. May play a role in cytokinesis (Potential). May play a role in the cytoarchitecture of neurons, including dendritic arborization and dendritic spines, and in GABAergic synaptic connectivity. During Listeria monocytogenes infection, not required for the bacterial entry process, but restricts its efficacy. This Homo sapiens (Human) protein is Septin-11.